Here is a 121-residue protein sequence, read N- to C-terminus: Large ribosomal subunit protein bL12 (121 aa).

Belongs to the bacterial ribosomal protein bL12 family. Homodimer. Part of the ribosomal stalk of the 50S ribosomal subunit. Forms a multimeric L10(L12)X complex, where L10 forms an elongated spine to which 2 to 4 L12 dimers bind in a sequential fashion. Binds GTP-bound translation factors.

In terms of biological role, forms part of the ribosomal stalk which helps the ribosome interact with GTP-bound translation factors. Is thus essential for accurate translation. The sequence is that of Large ribosomal subunit protein bL12 from Pseudomonas fluorescens (strain Pf0-1).